The chain runs to 195 residues: Small ribosomal subunit protein uS5 (195 aa).

Positions Ile22–Val85 constitute an S5 DRBM domain. The segment at Gln164–Gly195 is disordered. Residues Lys172–Asp182 are compositionally biased toward basic and acidic residues. Low complexity predominate over residues Gly183–Gly195.

This sequence belongs to the universal ribosomal protein uS5 family. In terms of assembly, part of the 30S ribosomal subunit. Contacts proteins S4 and S8.

In terms of biological role, with S4 and S12 plays an important role in translational accuracy. Functionally, located at the back of the 30S subunit body where it stabilizes the conformation of the head with respect to the body. In Phenylobacterium zucineum (strain HLK1), this protein is Small ribosomal subunit protein uS5.